The primary structure comprises 201 residues: Recombination protein RecR (201 aa).

The C4-type zinc finger occupies 60–75; the sequence is CSRCGNVDTVDPCIVC. In terms of domain architecture, Toprim spans 83-178; the sequence is SVIIVVEDVS…KITRLAHGVP (96 aa).

This sequence belongs to the RecR family.

Functionally, may play a role in DNA repair. It seems to be involved in an RecBC-independent recombinational process of DNA repair. It may act with RecF and RecO. In Rhizobium johnstonii (strain DSM 114642 / LMG 32736 / 3841) (Rhizobium leguminosarum bv. viciae), this protein is Recombination protein RecR.